We begin with the raw amino-acid sequence, 102 residues long: Small ribosomal subunit protein uS10 (102 aa).

It belongs to the universal ribosomal protein uS10 family. As to quaternary structure, part of the 30S ribosomal subunit.

In terms of biological role, involved in the binding of tRNA to the ribosomes. In Xanthobacter autotrophicus (strain ATCC BAA-1158 / Py2), this protein is Small ribosomal subunit protein uS10.